Here is a 335-residue protein sequence, read N- to C-terminus: Phosphate acyltransferase (335 aa).

Belongs to the PlsX family. Homodimer. Probably interacts with PlsY.

It localises to the cytoplasm. The enzyme catalyses a fatty acyl-[ACP] + phosphate = an acyl phosphate + holo-[ACP]. It participates in lipid metabolism; phospholipid metabolism. Catalyzes the reversible formation of acyl-phosphate (acyl-PO(4)) from acyl-[acyl-carrier-protein] (acyl-ACP). This enzyme utilizes acyl-ACP as fatty acyl donor, but not acyl-CoA. The polypeptide is Phosphate acyltransferase (Clostridium botulinum (strain ATCC 19397 / Type A)).